We begin with the raw amino-acid sequence, 437 residues long: Ribosomal protein uS12 methylthiotransferase RimO (437 aa).

The 117-residue stretch at 9-125 (PAIFLLSLGC…VLAAIGAHYC (117 aa)) folds into the MTTase N-terminal domain. [4Fe-4S] cluster contacts are provided by cysteine 18, cysteine 54, cysteine 88, cysteine 149, cysteine 153, and cysteine 156. Residues 135 to 364 (LTPPHYAFLK…MELQESIAAS (230 aa)) form the Radical SAM core domain. Residues 367 to 434 (RKLEGQTLTV…AYELFGRVGS (68 aa)) enclose the TRAM domain.

Belongs to the methylthiotransferase family. RimO subfamily. The cofactor is [4Fe-4S] cluster.

It localises to the cytoplasm. The enzyme catalyses L-aspartate(89)-[ribosomal protein uS12]-hydrogen + (sulfur carrier)-SH + AH2 + 2 S-adenosyl-L-methionine = 3-methylsulfanyl-L-aspartate(89)-[ribosomal protein uS12]-hydrogen + (sulfur carrier)-H + 5'-deoxyadenosine + L-methionine + A + S-adenosyl-L-homocysteine + 2 H(+). Catalyzes the methylthiolation of an aspartic acid residue of ribosomal protein uS12. This chain is Ribosomal protein uS12 methylthiotransferase RimO, found in Chlorobaculum parvum (strain DSM 263 / NCIMB 8327) (Chlorobium vibrioforme subsp. thiosulfatophilum).